The primary structure comprises 101 residues: Small ribosomal subunit protein uS14 (101 aa).

Belongs to the universal ribosomal protein uS14 family. As to quaternary structure, part of the 30S ribosomal subunit. Contacts proteins S3 and S10.

Functionally, binds 16S rRNA, required for the assembly of 30S particles and may also be responsible for determining the conformation of the 16S rRNA at the A site. This Chlamydia pneumoniae (Chlamydophila pneumoniae) protein is Small ribosomal subunit protein uS14.